The sequence spans 439 residues: Fibroleukin (439 aa).

An N-terminal signal peptide occupies residues 1 to 23; sequence MKLANWYWLSSAVLATYGFLVVA. Asn-25 is a glycosylation site (N-linked (GlcNAc...) asparagine). A coiled-coil region spans residues 73–165; sequence SRIEEVFKEV…GRLEKLNLVN (93 aa). The segment at 103-126 is disordered; that stretch reads ADDNGDPGRNGLLLPSTGAPGEVG. N-linked (GlcNAc...) asparagine glycosylation is found at Asn-179, Asn-235, Asn-263, and Asn-336. The Fibrinogen C-terminal domain maps to 204–436; sequence PVQHLIYKDC…EAKMMIRPKH (233 aa). A disulfide bond links Cys-213 and Cys-242. A disulfide bridge links Cys-371 with Cys-384.

Homotetramer; disulfide-linked. As to expression, constitutively expressed in cytotoxic T-cells.

The protein resides in the secreted. In terms of biological role, may play a role in physiologic lymphocyte functions at mucosal sites. In Homo sapiens (Human), this protein is Fibroleukin (FGL2).